Reading from the N-terminus, the 170-residue chain is Large ribosomal subunit protein uL10 (170 aa).

Belongs to the universal ribosomal protein uL10 family. In terms of assembly, part of the ribosomal stalk of the 50S ribosomal subunit. The N-terminus interacts with L11 and the large rRNA to form the base of the stalk. The C-terminus forms an elongated spine to which L12 dimers bind in a sequential fashion forming a multimeric L10(L12)X complex.

Forms part of the ribosomal stalk, playing a central role in the interaction of the ribosome with GTP-bound translation factors. This chain is Large ribosomal subunit protein uL10, found in Chlamydia felis (strain Fe/C-56) (Chlamydophila felis).